We begin with the raw amino-acid sequence, 325 residues long: Aerobic respiration control sensor protein ArcB homolog (325 aa).

The Cytoplasmic segment spans residues 1–26; that stretch reads MKNFKYFAQSYVDWVIRLGRLRFSLL. Residues 27–47 traverse the membrane as a helical segment; that stretch reads GVMILAVLALCTQILFSLFIV. At 48–57 the chain is on the periplasmic side; that stretch reads HQISWVDIFR. The chain crosses the membrane as a helical span at residues 58-78; sequence SVTFGLLTAPFVIYFFTLLVE. At 79 to 325 the chain is on the cytoplasmic side; it reads KLEHSRLDLS…AQLMGRGFNS (247 aa). The 198-residue stretch at 128–325 folds into the Histidine kinase domain; it reads TISHEFRTPL…AQLMGRGFNS (198 aa). Residue histidine 131 is modified to Phosphohistidine; by autocatalysis.

It localises to the cell inner membrane. The enzyme catalyses ATP + protein L-histidine = ADP + protein N-phospho-L-histidine.. Functionally, member of the two-component regulatory system ArcB/ArcA. Activates ArcA by phosphorylation. This is Aerobic respiration control sensor protein ArcB homolog (arcB) from Haemophilus influenzae (strain ATCC 51907 / DSM 11121 / KW20 / Rd).